We begin with the raw amino-acid sequence, 106 residues long: Small ribosomal subunit protein uS10 (106 aa).

The protein belongs to the universal ribosomal protein uS10 family. In terms of assembly, part of the 30S ribosomal subunit.

Involved in the binding of tRNA to the ribosomes. The protein is Small ribosomal subunit protein uS10 of Caldicellulosiruptor bescii (strain ATCC BAA-1888 / DSM 6725 / KCTC 15123 / Z-1320) (Anaerocellum thermophilum).